We begin with the raw amino-acid sequence, 211 residues long: Ceramide-1-phosphate transfer protein (211 aa).

5 residues coordinate an N-acylsphingoid base 1-phosphate: D53, K57, R103, R107, and H147.

The protein belongs to the GLTP family.

It is found in the cytoplasm. The protein localises to the cytosol. It localises to the golgi apparatus. The protein resides in the trans-Golgi network membrane. Its subcellular location is the cell membrane. It is found in the endosome membrane. The protein localises to the nucleus outer membrane. It carries out the reaction N-(hexadecanoyl)-sphing-4-enine-1-phosphate(in) = N-(hexadecanoyl)-sphing-4-enine-1-phosphate(out). The enzyme catalyses N-(9Z-octadecenoyl)-sphing-4-enine-1-phosphate(in) = N-(9Z-octadecenoyl)-sphing-4-enine-1-phosphate(out). Mediates the intracellular transfer of ceramide-1-phosphate (C1P) between organelle membranes and the cell membrane. Required for normal structure of the Golgi stacks. Can bind phosphoceramides with a variety of aliphatic chains, but has a preference for lipids with saturated C16:0 or monounsaturated C18:1 aliphatic chains, and is inefficient with phosphoceramides containing lignoceryl (C24:0). Plays a role in the regulation of the cellular levels of ceramide-1-phosphate, and thereby contributes to the regulation of phospholipase PLA2G4A activity and the release of arachidonic acid. Has no activity with galactosylceramide, lactosylceramide, sphingomyelin, phosphatidylcholine, phosphatidic acid and ceramide. C1P transfer is stimulated by phosphatidylserine in C1P source vesicles. Regulates autophagy and pyroptosis, but not apoptosis. The polypeptide is Ceramide-1-phosphate transfer protein (cptp) (Danio rerio (Zebrafish)).